Reading from the N-terminus, the 229-residue chain is Cytochrome c oxidase subunit 2 (229 aa).

Residues 1–14 (MANPSQFGFQDASS) lie on the Mitochondrial intermembrane side of the membrane. A helical membrane pass occupies residues 15–45 (PIMEELVEFHDHALMVALAICSLVLYLLALM). The Mitochondrial matrix portion of the chain corresponds to 46 to 58 (LVEKLSSNTVDAQ). A helical membrane pass occupies residues 59 to 86 (EVELIWTILPAIVLILLALPSLQILYMM). Residues 87–229 (DEIDEPDLTL…SWSSLLSTDS (143 aa)) lie on the Mitochondrial intermembrane side of the membrane. Positions 160, 195, 197, 199, 203, and 206 each coordinate Cu cation. Residue E197 coordinates Mg(2+).

It belongs to the cytochrome c oxidase subunit 2 family. In terms of assembly, component of the cytochrome c oxidase (complex IV, CIV), a multisubunit enzyme composed of 14 subunits. The complex is composed of a catalytic core of 3 subunits MT-CO1, MT-CO2 and MT-CO3, encoded in the mitochondrial DNA, and 11 supernumerary subunits COX4I, COX5A, COX5B, COX6A, COX6B, COX6C, COX7A, COX7B, COX7C, COX8 and NDUFA4, which are encoded in the nuclear genome. The complex exists as a monomer or a dimer and forms supercomplexes (SCs) in the inner mitochondrial membrane with NADH-ubiquinone oxidoreductase (complex I, CI) and ubiquinol-cytochrome c oxidoreductase (cytochrome b-c1 complex, complex III, CIII), resulting in different assemblies (supercomplex SCI(1)III(2)IV(1) and megacomplex MCI(2)III(2)IV(2)). Found in a complex with TMEM177, COA6, COX18, COX20, SCO1 and SCO2. Interacts with TMEM177 in a COX20-dependent manner. Interacts with COX20. Interacts with COX16. It depends on Cu cation as a cofactor.

It is found in the mitochondrion inner membrane. The enzyme catalyses 4 Fe(II)-[cytochrome c] + O2 + 8 H(+)(in) = 4 Fe(III)-[cytochrome c] + 2 H2O + 4 H(+)(out). In terms of biological role, component of the cytochrome c oxidase, the last enzyme in the mitochondrial electron transport chain which drives oxidative phosphorylation. The respiratory chain contains 3 multisubunit complexes succinate dehydrogenase (complex II, CII), ubiquinol-cytochrome c oxidoreductase (cytochrome b-c1 complex, complex III, CIII) and cytochrome c oxidase (complex IV, CIV), that cooperate to transfer electrons derived from NADH and succinate to molecular oxygen, creating an electrochemical gradient over the inner membrane that drives transmembrane transport and the ATP synthase. Cytochrome c oxidase is the component of the respiratory chain that catalyzes the reduction of oxygen to water. Electrons originating from reduced cytochrome c in the intermembrane space (IMS) are transferred via the dinuclear copper A center (CU(A)) of subunit 2 and heme A of subunit 1 to the active site in subunit 1, a binuclear center (BNC) formed by heme A3 and copper B (CU(B)). The BNC reduces molecular oxygen to 2 water molecules using 4 electrons from cytochrome c in the IMS and 4 protons from the mitochondrial matrix. The polypeptide is Cytochrome c oxidase subunit 2 (MT-CO2) (Struthio camelus (Common ostrich)).